A 332-amino-acid polypeptide reads, in one-letter code: mRNA-decapping enzyme 1 (332 aa).

Residues 141 to 173 (ARAAKAASEAPQASVPAPTQAPAAPAQAPQMAP) are compositionally biased toward low complexity. A disordered region spans residues 141-175 (ARAAKAASEAPQASVPAPTQAPAAPAQAPQMAPQA).

The protein belongs to the DCP1 family. May be a component of the decapping complex composed of dcap-1 and dcap-2. Expressed in neurons including touch receptor neurons and motor neurons.

The protein resides in the cytoplasm. It localises to the cytoplasmic granule. Component of the decapping complex necessary for the degradation of mRNAs, both in normal mRNA turnover and in nonsense-mediated mRNA decay. In contrast to orthologs, does not possess decapping activity and does not remove the 7-methyl guanine cap structure from mRNA molecules. In the nervous system, negatively regulates the expression of insulin-like peptide ins-7, which in turn promotes longevity. This may in part be through promoting the activity of daf-16 in distal tissues. Required for the developmental axon guidance and regrowth of PLM touch receptor neurons. In ADL sensory neurons, plays a role in ciliary shape formation. Acts in neurons to promote larval survival at high temperatures by negatively regulating lin-14 expression. In Caenorhabditis elegans, this protein is mRNA-decapping enzyme 1.